We begin with the raw amino-acid sequence, 168 residues long: Leukotoxin-activating lysine-acyltransferase LtxC (168 aa).

Catalysis depends on residues His-23 and Asp-92.

Belongs to the RTX toxin acyltransferase family.

It is found in the cytoplasm. The enzyme catalyses a fatty acyl-[ACP] + L-lysyl-[protein] = N(6)-(fatty acyl)-L-lysyl-[protein] + holo-[ACP] + H(+). Functionally, required for full activity and modification of the LtxA leukotoxin. Involved in fatty acid modification of the protoxin at two internal lysine residues, thereby converting it to the active toxin. The sequence is that of Leukotoxin-activating lysine-acyltransferase LtxC from Aggregatibacter actinomycetemcomitans (Actinobacillus actinomycetemcomitans).